The primary structure comprises 206 residues: Isochorismatase family protein 1B (206 aa).

Belongs to the isochorismatase family.

The polypeptide is Isochorismatase family protein 1B (Dictyostelium discoideum (Social amoeba)).